A 430-amino-acid chain; its full sequence is Resistance to inhibitors of cholinesterase protein 19 (430 aa).

Residues 56-260 enclose the AH domain; it reads ASDNELDTCL…TSRAFETLAE (205 aa). The segment at 279–342 is disordered; the sequence is GTKPERERKS…SPLIEDVDDE (64 aa). A compositionally biased stretch (basic and acidic residues) spans 281–294; sequence KPERERKSEKEESA.

As to quaternary structure, interacts with the GTPase activator protein tbc-8; the interaction is direct and may be required for the activation of rab-2 and dense vesicle maturation in cholinergic motoneurons. Interacts with rund-1. As to expression, expressed in all neurons. Highly expressed in m2 pharyngeal neurons and some pharyngeal interneurons. Also expressed in the excretory canal and the gland cells located just below the nerve ring in the head.

The protein resides in the cytoplasm. It localises to the cytoplasmic vesicle membrane. In terms of biological role, may be involved in neurotransmitter secretion. In association with the GTPase activator protein tbc-8 activates rab-2 during dense core vesicle maturation in cholinergic motoneurons. The polypeptide is Resistance to inhibitors of cholinesterase protein 19 (Caenorhabditis elegans).